Here is a 317-residue protein sequence, read N- to C-terminus: L-lactate dehydrogenase 1 (317 aa).

NAD(+)-binding positions include Val17, Asp38, Lys43, Tyr69, and 83-84; that span reads GA. Residues Gln86 and Arg92 each contribute to the substrate site. NAD(+) contacts are provided by residues Ser105, 122–124, and Ser147; that span reads ATN. Substrate is bound at residue 124–127; the sequence is NPVD. 152-155 serves as a coordination point for substrate; it reads DSAR. The Proton acceptor role is filled by His179. The residue at position 223 (Tyr223) is a Phosphotyrosine. Thr232 lines the substrate pocket.

The protein belongs to the LDH/MDH superfamily. LDH family. Homotetramer.

It localises to the cytoplasm. It catalyses the reaction (S)-lactate + NAD(+) = pyruvate + NADH + H(+). Its pathway is fermentation; pyruvate fermentation to lactate; (S)-lactate from pyruvate: step 1/1. Its function is as follows. Catalyzes the conversion of lactate to pyruvate (Potential). Appears to be the primary factor that allows S.aureus growth during nitrosative stress in both aerobically and anaerobically cultured cells. This Staphylococcus aureus (strain JH1) protein is L-lactate dehydrogenase 1.